A 590-amino-acid chain; its full sequence is MHAFRTHTCAELTKDAVGQTVRLSGWVHRVRDHGGVLFIDLRDHYGMTQVLCDPDSPVFSQVEKVRSEWCIRIDGTVKARDESLINPKIPTGEIEVFIRDMEVLGTAEELPLPVFGDQEYPEETRLKYRFLDLRRESLHDNIMLRSKVVQSIRKRMWDIDFTEFQTPIITASSPEGARDFLVPSRLHPGKFYALPQAPQQFKQLIMVGGFDKYFQIAPCFRDEDPRADRSPTDFYQLDLEMSFVSQQDVFDTIQPVIAGIFEEFGGGRRVDTDWPLISYRDSALWYGTDKPDLRNPIKMQIVSDHFAGSGFAIFAKLLEQEGTEIRAIPAPGGGSRKFCDRMNKFAQEQGLPGMGYIFWRDQGQGMEAAGPLAKNIGPERTEAIRQQLGLQVGDAAFFLGGKPASFEAVAGRARTVIGEELGLIDQDRFAFAWIVDFPMYEKDDEGRIDFSHNPFSMPQGGMAALEGDPLEVLGYQYDLACNGYELVSGAIRNHKLDIMYKAFEIAGYGADEVEKRFGGMVNAFKYGPPPHGGCAAGIDRIVMLLADTANIREVIMFPMNQRAEDLMMNAPSEPTGEQLRDLSLRVIPQE.

Glutamate 175 lines the L-aspartate pocket. The aspartate stretch occupies residues 199–202 (QQFK). L-aspartate contacts are provided by arginine 221 and histidine 452. 221–223 (RDE) lines the ATP pocket. ATP is bound at residue glutamate 485. Residue arginine 492 participates in L-aspartate binding. Residue 537–540 (GIDR) participates in ATP binding.

The protein belongs to the class-II aminoacyl-tRNA synthetase family. Type 1 subfamily. Homodimer.

The protein resides in the cytoplasm. The catalysed reaction is tRNA(Asx) + L-aspartate + ATP = L-aspartyl-tRNA(Asx) + AMP + diphosphate. In terms of biological role, aspartyl-tRNA synthetase with relaxed tRNA specificity since it is able to aspartylate not only its cognate tRNA(Asp) but also tRNA(Asn). Reaction proceeds in two steps: L-aspartate is first activated by ATP to form Asp-AMP and then transferred to the acceptor end of tRNA(Asp/Asn). This chain is Aspartate--tRNA(Asp/Asn) ligase, found in Dinoroseobacter shibae (strain DSM 16493 / NCIMB 14021 / DFL 12).